We begin with the raw amino-acid sequence, 254 residues long: Long form salivary protein D7LC (254 aa).

Residues 1 to 19 form the signal peptide; the sequence is MNAVITSLLFLSLVGLGYS. 2 disulfide bridges follow: cysteine 36/cysteine 66 and cysteine 62/cysteine 112. Tryptophan 49 serves as a coordination point for thromboxane A2. Tryptophan 52 is a binding site for leukotriene C4. Tyrosine 63 contributes to the thromboxane A2 binding site. Leukotriene C4 is bound by residues glycine 136 and lysine 154. A thromboxane A2-binding site is contributed by lysine 154. 3 cysteine pairs are disulfide-bonded: cysteine 162–cysteine 178, cysteine 174–cysteine 221, and cysteine 211–cysteine 230.

Belongs to the PBP/GOBP family.

The protein localises to the secreted. In terms of biological role, modulates blood feeding of female sandflies on vertebrate species by binding and sequestering different mediators involved in the host response. Binds leukotriene C4, leukotriene D4, leukotriene E4 and U-46619, a stable analog of thromboxane A2. Does not bind histamine or serotonin. Inhibits platelet aggregation induced by low concentrations of collagen in thromboxane A2-dependent manner. The chain is Long form salivary protein D7LC from Phlebotomus papatasi (Sandfly).